The chain runs to 207 residues: High frequency lysogenization protein HflD homolog (207 aa).

This sequence belongs to the HflD family.

The protein resides in the cytoplasm. Its subcellular location is the cell inner membrane. The protein is High frequency lysogenization protein HflD homolog of Cellvibrio japonicus (strain Ueda107) (Pseudomonas fluorescens subsp. cellulosa).